A 107-amino-acid polypeptide reads, in one-letter code: Glutaredoxin 4 (107 aa).

Residues 4–106 (LDKIKKQISE…TLLAEVAAKH (103 aa)) form the Glutaredoxin domain. Lys21 contributes to the glutathione binding site. Cys29 lines the [2Fe-2S] cluster pocket. Glutathione contacts are provided by residues Arg58, Phe70, and 83–84 (CD).

It belongs to the glutaredoxin family. Monothiol subfamily. As to quaternary structure, homodimer.

The protein localises to the cytoplasm. Monothiol glutaredoxin involved in the biogenesis of iron-sulfur clusters. This Haemophilus influenzae (strain ATCC 51907 / DSM 11121 / KW20 / Rd) protein is Glutaredoxin 4 (grxD).